We begin with the raw amino-acid sequence, 1075 residues long: MAPRKRNRHALGFLCCFGGSDLPEINLKDNNPLQFLDFTVPIPPTEELNARFSELVDELDLTDKNREAMFALPPEKKWQIYCSKKKEQEDPNKLATSWPDYYIDRINSMAAMQTLYAFDEEETEMKNKIVEDLKTALRTQPMRFVMRFIELDGLSCLLNFLKSMDYETSESRIHTSVIGCIKALMNNSQGRAHVLAHPESINIISQSLRTENIKTKIAVLEILGAVCLVPDGHKKVLQAMLHYQVYAAERTRFQTLLNELDRSMGRYRDEVNLKTAIMSFINAVLNAGAGEDNLEFRLHLRYEFLMLGIQPVIDKLREHENATLDRHLDFFEMVRNEDDLELAKRFDLIHIDTKSASQMFELIKKRLKHTDAYPYLLSILQHCLQMPYKRNGGNFQQWQLLDRILQQIVLQDERGDDPDIAPLENFNVKNIIKMLVNENEVKQWRDQAEKFRKDHAELMSKLEKKERECETKTQEKDEMMKTLNKMKDKLQKESLELRQARDQMNDLVAQLNEYSQGGSISFPAPPPPPPGGPLALSSALSSALTSENLPPLPPPLPFSSCPPPPAPPPPPGGPPPPPGAPPFFSLGVPPPSTTTFSSAGTSLKKKSIPQPSHPLKSFNWAKLSEERIHGTIWNEIDDLKAFKVLDLEDFEKMFSAYQRHQKEMGSTEDLYLSTRKVKELSVIDGRRAQNCVILLSKLKLSNEEIRQAILKMDEQEDLAKDMLEQLLKFVPEKSDTDLLEEHKHEIERMARADRFLFEMSRIDHYQQRLQALFFKKKFPERLAEAKPKVEAILLASKELIRSKRLRQLLEVVLAFGNYMNKGQRGSAYGFKVSSLNKIADTKSSIDRNITLLHYLIMIFEKNYPDILDIQTELQHLPEAAKVNLVELEKEVNNIKTGLKAVEAELDYQKRRIRESGDRFVPVMSDFITVASFSFSELEDLLNDARDKYAKALKHFGENEGKMQPDEFFGIFDTFLQSFAEAKQDLENMRKKKEEEERRARMEAMLKEQREKERRQKKAKAGSISEETGEFDDLVSALRSGEVFDKDLSKLKRNRKRSGNQGLETSRERVVTKLNY.

The GBD/FH3 domain maps to 40–416 (VPIPPTEELN…QIVLQDERGD (377 aa)). A coiled-coil region spans residues 437–517 (NENEVKQWRD…VAQLNEYSQG (81 aa)). Disordered stretches follow at residues 517-611 (GGSI…IPQP), 1006-1025 (KEQR…SISE), and 1048-1075 (SKLK…KLNY). Over residues 523–532 (PAPPPPPPGG) the composition is skewed to pro residues. Over residues 533 to 544 (PLALSSALSSAL) the composition is skewed to low complexity. Residues 550–581 (PPLPPPLPFSSCPPPPAPPPPPGGPPPPPGAP) show a composition bias toward pro residues. Residues 605 to 1075 (KKSIPQPSHP…RERVVTKLNY (471 aa)) enclose the FH2 domain. One can recognise a DAD domain in the interval 1025–1075 (EETGEFDDLVSALRSGEVFDKDLSKLKRNRKRSGNQGLETSRERVVTKLNY). Over residues 1064–1075 (TSRERVVTKLNY) the composition is skewed to basic and acidic residues.

Belongs to the formin homology family. As to expression, expressed in progenitor populations of the embryonic spinal cord (at protein level).

In terms of biological role, key regulator of the Wnt signaling pathway, which is required for various processes during development, such as dorsal patterning, determination of left/right symmetry or myelination in the central nervous system. Acts downstream of Wnt ligands and upstream of beta-catenin (CTNNB1). Required for canonical Wnt signaling pathway during patterning in the dorsal spinal cord by promoting the aggregation of Disheveled (Dvl) complexes, thereby clustering and formation of Wnt receptor signalosomes and potentiating Wnt activity. During dorsal patterning of the spinal cord, inhibits oligodendrocytes differentiation via interaction with PIP5K1A. Also regulates non-canonical Wnt signaling pathway. Acts downstream of PITX2 in the developing gut and is required for left/right asymmetry within dorsal mesentery: affects mesenchymal condensation by lengthening cadherin-based junctions through WNT5A and non-canonical Wnt signaling, inducing polarized condensation in the left dorsal mesentery necessary to initiate gut rotation. Together with DAAM1, required for myocardial maturation and sarcomere assembly. The sequence is that of Disheveled-associated activator of morphogenesis 2 from Gallus gallus (Chicken).